The sequence spans 311 residues: Lipoyl synthase (311 aa).

[4Fe-4S] cluster contacts are provided by Cys47, Cys52, Cys58, Cys73, Cys77, Cys80, and Ser286. One can recognise a Radical SAM core domain in the interval 59–276; it reads WSRHTATYLA…RSVGESLGLF (218 aa).

It belongs to the radical SAM superfamily. Lipoyl synthase family. [4Fe-4S] cluster is required as a cofactor.

Its subcellular location is the cytoplasm. The catalysed reaction is [[Fe-S] cluster scaffold protein carrying a second [4Fe-4S](2+) cluster] + N(6)-octanoyl-L-lysyl-[protein] + 2 oxidized [2Fe-2S]-[ferredoxin] + 2 S-adenosyl-L-methionine + 4 H(+) = [[Fe-S] cluster scaffold protein] + N(6)-[(R)-dihydrolipoyl]-L-lysyl-[protein] + 4 Fe(3+) + 2 hydrogen sulfide + 2 5'-deoxyadenosine + 2 L-methionine + 2 reduced [2Fe-2S]-[ferredoxin]. It participates in protein modification; protein lipoylation via endogenous pathway; protein N(6)-(lipoyl)lysine from octanoyl-[acyl-carrier-protein]: step 2/2. Functionally, catalyzes the radical-mediated insertion of two sulfur atoms into the C-6 and C-8 positions of the octanoyl moiety bound to the lipoyl domains of lipoate-dependent enzymes, thereby converting the octanoylated domains into lipoylated derivatives. The protein is Lipoyl synthase of Chlamydia trachomatis serovar L2 (strain ATCC VR-902B / DSM 19102 / 434/Bu).